A 142-amino-acid chain; its full sequence is Large ribosomal subunit protein uL13 (142 aa).

Belongs to the universal ribosomal protein uL13 family. Part of the 50S ribosomal subunit.

Its function is as follows. This protein is one of the early assembly proteins of the 50S ribosomal subunit, although it is not seen to bind rRNA by itself. It is important during the early stages of 50S assembly. In Ralstonia pickettii (strain 12J), this protein is Large ribosomal subunit protein uL13.